The following is a 222-amino-acid chain: Probable transaldolase (222 aa).

Lys-83 functions as the Schiff-base intermediate with substrate in the catalytic mechanism.

This sequence belongs to the transaldolase family. Type 3B subfamily.

It localises to the cytoplasm. The enzyme catalyses D-sedoheptulose 7-phosphate + D-glyceraldehyde 3-phosphate = D-erythrose 4-phosphate + beta-D-fructose 6-phosphate. It functions in the pathway carbohydrate degradation; pentose phosphate pathway; D-glyceraldehyde 3-phosphate and beta-D-fructose 6-phosphate from D-ribose 5-phosphate and D-xylulose 5-phosphate (non-oxidative stage): step 2/3. In terms of biological role, transaldolase is important for the balance of metabolites in the pentose-phosphate pathway. This is Probable transaldolase from Nitrosopumilus maritimus (strain SCM1).